The primary structure comprises 95 residues: Aspartyl/glutamyl-tRNA(Asn/Gln) amidotransferase subunit C (95 aa).

Belongs to the GatC family. In terms of assembly, heterotrimer of A, B and C subunits.

The catalysed reaction is L-glutamyl-tRNA(Gln) + L-glutamine + ATP + H2O = L-glutaminyl-tRNA(Gln) + L-glutamate + ADP + phosphate + H(+). It catalyses the reaction L-aspartyl-tRNA(Asn) + L-glutamine + ATP + H2O = L-asparaginyl-tRNA(Asn) + L-glutamate + ADP + phosphate + 2 H(+). Functionally, allows the formation of correctly charged Asn-tRNA(Asn) or Gln-tRNA(Gln) through the transamidation of misacylated Asp-tRNA(Asn) or Glu-tRNA(Gln) in organisms which lack either or both of asparaginyl-tRNA or glutaminyl-tRNA synthetases. The reaction takes place in the presence of glutamine and ATP through an activated phospho-Asp-tRNA(Asn) or phospho-Glu-tRNA(Gln). This chain is Aspartyl/glutamyl-tRNA(Asn/Gln) amidotransferase subunit C, found in Chlorobium limicola (strain DSM 245 / NBRC 103803 / 6330).